The chain runs to 469 residues: tRNA-2-methylthio-N(6)-dimethylallyladenosine synthase (469 aa).

The 121-residue stretch at 22–142 folds into the MTTase N-terminal domain; it reads RKVFIKTYGC…LPEALRRAKE (121 aa). 6 residues coordinate [4Fe-4S] cluster: C31, C67, C105, C183, C187, and C190. Residues 169–401 form the Radical SAM core domain; the sequence is RARGVTAFLT…QALLLKQQQE (233 aa). A TRAM domain is found at 404 to 466; the sequence is ESCIGKEIDL…TNSLFAERAE (63 aa).

Belongs to the methylthiotransferase family. MiaB subfamily. Monomer. [4Fe-4S] cluster serves as cofactor.

It localises to the cytoplasm. It catalyses the reaction N(6)-dimethylallyladenosine(37) in tRNA + (sulfur carrier)-SH + AH2 + 2 S-adenosyl-L-methionine = 2-methylsulfanyl-N(6)-dimethylallyladenosine(37) in tRNA + (sulfur carrier)-H + 5'-deoxyadenosine + L-methionine + A + S-adenosyl-L-homocysteine + 2 H(+). Functionally, catalyzes the methylthiolation of N6-(dimethylallyl)adenosine (i(6)A), leading to the formation of 2-methylthio-N6-(dimethylallyl)adenosine (ms(2)i(6)A) at position 37 in tRNAs that read codons beginning with uridine. The sequence is that of tRNA-2-methylthio-N(6)-dimethylallyladenosine synthase from Rhizobium etli (strain ATCC 51251 / DSM 11541 / JCM 21823 / NBRC 15573 / CFN 42).